Here is a 438-residue protein sequence, read N- to C-terminus: GTPase Obg (438 aa).

One can recognise an Obg domain in the interval 2–160; the sequence is NMFVDQIKIE…HYLELELKML (159 aa). In terms of domain architecture, OBG-type G spans 161-337; it reads ADVGLIGFPS…LMQLTADLLD (177 aa). Residues 167–174, 192–196, 214–217, 284–287, and 318–320 each bind GTP; these read GFPSVGKS, FTTLT, DMPG, TKMD, and SAV. Residues Ser174 and Thr194 each contribute to the Mg(2+) site. One can recognise an OCT domain in the interval 360-438; that stretch reads PDKKDEADFT…IEKFVFEFIQ (79 aa).

This sequence belongs to the TRAFAC class OBG-HflX-like GTPase superfamily. OBG GTPase family. In terms of assembly, monomer. It depends on Mg(2+) as a cofactor.

It is found in the cytoplasm. In terms of biological role, an essential GTPase which binds GTP, GDP and possibly (p)ppGpp with moderate affinity, with high nucleotide exchange rates and a fairly low GTP hydrolysis rate. Plays a role in control of the cell cycle, stress response, ribosome biogenesis and in those bacteria that undergo differentiation, in morphogenesis control. This Limosilactobacillus reuteri (strain DSM 20016) (Lactobacillus reuteri) protein is GTPase Obg.